The sequence spans 126 residues: Aspartate 1-decarboxylase (126 aa).

The active-site Schiff-base intermediate with substrate; via pyruvic acid is the Ser-25. Position 25 is a pyruvic acid (Ser) (Ser-25). Thr-57 contacts substrate. Tyr-58 acts as the Proton donor in catalysis. Residue 72-74 participates in substrate binding; the sequence is GAA.

It belongs to the PanD family. As to quaternary structure, heterooctamer of four alpha and four beta subunits. Requires pyruvate as cofactor. Post-translationally, is synthesized initially as an inactive proenzyme, which is activated by self-cleavage at a specific serine bond to produce a beta-subunit with a hydroxyl group at its C-terminus and an alpha-subunit with a pyruvoyl group at its N-terminus.

Its subcellular location is the cytoplasm. It catalyses the reaction L-aspartate + H(+) = beta-alanine + CO2. It functions in the pathway cofactor biosynthesis; (R)-pantothenate biosynthesis; beta-alanine from L-aspartate: step 1/1. Its function is as follows. Catalyzes the pyruvoyl-dependent decarboxylation of aspartate to produce beta-alanine. The polypeptide is Aspartate 1-decarboxylase (Campylobacter jejuni subsp. jejuni serotype O:23/36 (strain 81-176)).